Reading from the N-terminus, the 612-residue chain is BTB/POZ domain-containing protein 9 (612 aa).

The BTB domain occupies 36 to 104; the sequence is GDVTFVVEKK…IYTGRATLTD (69 aa). One can recognise a BACK domain in the interval 142–240; it reads VCMTFDVASL…SLTELLNVVR (99 aa). Residues 559-612 form a disordered region; that stretch reads QQSNQKEDSSEEPGTGDPSTPNQQLDPHAPRAPSASSLPPSPGPNSRSPNQQNQ. Positions 589 to 612 are enriched in low complexity; that stretch reads RAPSASSLPPSPGPNSRSPNQQNQ.

In terms of tissue distribution, expressed in the brain (at protein level).

This Mus musculus (Mouse) protein is BTB/POZ domain-containing protein 9 (Btbd9).